The following is a 121-amino-acid chain: Small ribosomal subunit protein uS13 (121 aa).

A disordered region spans residues 99 to 121; the sequence is RGQRTRTNSRTRKGPRRKIMKKK. A compositionally biased stretch (basic residues) spans 101-121; it reads QRTRTNSRTRKGPRRKIMKKK.

It belongs to the universal ribosomal protein uS13 family. In terms of assembly, part of the 30S ribosomal subunit. Forms a loose heterodimer with protein S19. Forms two bridges to the 50S subunit in the 70S ribosome.

Functionally, located at the top of the head of the 30S subunit, it contacts several helices of the 16S rRNA. In the 70S ribosome it contacts the 23S rRNA (bridge B1a) and protein L5 of the 50S subunit (bridge B1b), connecting the 2 subunits; these bridges are implicated in subunit movement. Contacts the tRNAs in the A and P-sites. The protein is Small ribosomal subunit protein uS13 of Thermodesulfovibrio yellowstonii (strain ATCC 51303 / DSM 11347 / YP87).